A 183-amino-acid polypeptide reads, in one-letter code: NAD(P)H-quinone oxidoreductase subunit I, chloroplastic (183 aa).

4Fe-4S ferredoxin-type domains lie at 55-84 and 95-124; these read GRIH…VDWK and KSYS…MTEE. Residues C64, C67, C70, C74, C104, C107, C110, and C114 each coordinate [4Fe-4S] cluster.

The protein belongs to the complex I 23 kDa subunit family. In terms of assembly, NDH is composed of at least 16 different subunits, 5 of which are encoded in the nucleus. Requires [4Fe-4S] cluster as cofactor.

Its subcellular location is the plastid. The protein localises to the chloroplast thylakoid membrane. The enzyme catalyses a plastoquinone + NADH + (n+1) H(+)(in) = a plastoquinol + NAD(+) + n H(+)(out). It carries out the reaction a plastoquinone + NADPH + (n+1) H(+)(in) = a plastoquinol + NADP(+) + n H(+)(out). Its function is as follows. NDH shuttles electrons from NAD(P)H:plastoquinone, via FMN and iron-sulfur (Fe-S) centers, to quinones in the photosynthetic chain and possibly in a chloroplast respiratory chain. The immediate electron acceptor for the enzyme in this species is believed to be plastoquinone. Couples the redox reaction to proton translocation, and thus conserves the redox energy in a proton gradient. This is NAD(P)H-quinone oxidoreductase subunit I, chloroplastic from Anthoceros angustus (Hornwort).